The following is a 121-amino-acid chain: Flagellar protein FliT (121 aa).

Residues 1–50 (MNNAPHLYFAWQQLVEKSQLMLRLATEEQWDELIASEMAYVNAVQEIAHL) form a required for homodimerization region. The segment at 60-98 (MQEQLRPMLLLILDNESKVKQLLQIRMDELAKLVGQSSV) is fliD binding.

It belongs to the FliT family. As to quaternary structure, homodimer. Interacts with FliD and FlhC.

It localises to the cytoplasm. The protein resides in the cytosol. Dual-function protein that regulates the transcription of class 2 flagellar operons and that also acts as an export chaperone for the filament-capping protein FliD. As a transcriptional regulator, acts as an anti-FlhDC factor; it directly binds FlhC, thus inhibiting the binding of the FlhC/FlhD complex to class 2 promoters, resulting in decreased expression of class 2 flagellar operons. As a chaperone, effects FliD transition to the membrane by preventing its premature polymerization, and by directing it to the export apparatus. The sequence is that of Flagellar protein FliT from Escherichia coli O6:K15:H31 (strain 536 / UPEC).